The following is a 73-amino-acid chain: Putative defensin-like protein 33 (73 aa).

The N-terminal stretch at 1 to 25 (MASNKVSFIFILFLCVLSTAEFGEA) is a signal peptide. 3 disulfides stabilise this stretch: Cys33–Cys59, Cys45–Cys68, and Cys49–Cys70.

The protein belongs to the DEFL family.

The protein localises to the secreted. The protein is Putative defensin-like protein 33 of Arabidopsis thaliana (Mouse-ear cress).